Reading from the N-terminus, the 393-residue chain is Lipid-A-disaccharide synthase (393 aa).

This sequence belongs to the LpxB family.

The catalysed reaction is a lipid X + a UDP-2-N,3-O-bis[(3R)-3-hydroxyacyl]-alpha-D-glucosamine = a lipid A disaccharide + UDP + H(+). It functions in the pathway bacterial outer membrane biogenesis; LPS lipid A biosynthesis. Its function is as follows. Condensation of UDP-2,3-diacylglucosamine and 2,3-diacylglucosamine-1-phosphate to form lipid A disaccharide, a precursor of lipid A, a phosphorylated glycolipid that anchors the lipopolysaccharide to the outer membrane of the cell. The polypeptide is Lipid-A-disaccharide synthase (Rhodopseudomonas palustris (strain HaA2)).